A 499-amino-acid chain; its full sequence is Centrosomal protein of 57 kDa (499 aa).

A compositionally biased stretch (polar residues) spans 1–35 (MAAASVSETSASQFSNILAEPSKSNGSMVRHSSSP). A disordered region spans residues 1–58 (MAAASVSETSASQFSNILAEPSKSNGSMVRHSSSPYVVYPPDKPFLNSDLRRSPNKPT). Ser53 is subject to Phosphoserine. A centrosome localization domain (CLD) region spans residues 58-239 (TFAYPESNSR…KAAQLQTGLE (182 aa)). Residues 63 to 241 (ESNSRAIFSA…AQLQTGLEVN (179 aa)) adopt a coiled-coil conformation. The mediates interaction with microtubules stretch occupies residues 277–490 (AVQPHYRLCL…KDMQSIQNSL (214 aa)). 2 disordered regions span residues 334–357 (KQVS…SVNE) and 431–476 (KQKK…SRKN). Residues 346–357 (SATPPSSSSVNE) show a composition bias toward low complexity. The stretch at 389–450 (TVELKDNLEC…KTLDEEGNSS (62 aa)) forms a coiled coil. Residues 431-444 (KQKKELKATRKTLD) are compositionally biased toward basic and acidic residues. Residues 449-459 (SSSRSTTTGTT) show a composition bias toward low complexity. A compositionally biased stretch (basic and acidic residues) spans 460–474 (NKKDFAKPRPGEKSR).

This sequence belongs to the translokin family. As to quaternary structure, homodimer and homooligomer. Interacts with FGF2 and RAP80. Does not interact with FGF1 or FGF2 isoform 24 kDa. Interacts with microtubules.

The protein resides in the nucleus. Its subcellular location is the cytoplasm. The protein localises to the cytoskeleton. It is found in the microtubule organizing center. It localises to the centrosome. Centrosomal protein which may be required for microtubule attachment to centrosomes. May act by forming ring-like structures around microtubules. Mediates nuclear translocation and mitogenic activity of the internalized growth factor FGF2. This chain is Centrosomal protein of 57 kDa (CEP57), found in Bos taurus (Bovine).